Consider the following 883-residue polypeptide: Phosphoenolpyruvate carboxylase (883 aa).

Residues H138 and K546 contribute to the active site.

It belongs to the PEPCase type 1 family. In terms of assembly, homotetramer. The cofactor is Mg(2+).

It catalyses the reaction oxaloacetate + phosphate = phosphoenolpyruvate + hydrogencarbonate. Its activity is regulated as follows. The enzyme has distinct binding sites for each of the allosteric effectors such as acetyl-CoA, fructose 1,6-bisphosphate, guanosine 3'-diphosphate 5'-diphosphate, long chain fatty acids, and L-aspartate. Functionally, forms oxaloacetate, a four-carbon dicarboxylic acid source for the tricarboxylic acid cycle. In Salmonella typhi, this protein is Phosphoenolpyruvate carboxylase (ppc).